The sequence spans 367 residues: Alanine racemase (367 aa).

Lys-35 acts as the Proton acceptor; specific for D-alanine in catalysis. The residue at position 35 (Lys-35) is an N6-(pyridoxal phosphate)lysine. Substrate is bound at residue Arg-130. Residue Tyr-259 is the Proton acceptor; specific for L-alanine of the active site. Met-307 lines the substrate pocket.

It belongs to the alanine racemase family. It depends on pyridoxal 5'-phosphate as a cofactor.

It catalyses the reaction L-alanine = D-alanine. The protein operates within amino-acid biosynthesis; D-alanine biosynthesis; D-alanine from L-alanine: step 1/1. Its function is as follows. Catalyzes the interconversion of L-alanine and D-alanine. May also act on other amino acids. In Delftia acidovorans (strain DSM 14801 / SPH-1), this protein is Alanine racemase (alr).